Consider the following 201-residue polypeptide: Small ribosomal subunit protein uS4c (201 aa).

The S4 RNA-binding domain occupies 91–151; it reads MRLDNIIFQL…TKNPEELRTI (61 aa).

This sequence belongs to the universal ribosomal protein uS4 family. Part of the 30S ribosomal subunit. Contacts protein S5. The interaction surface between S4 and S5 is involved in control of translational fidelity.

The protein localises to the plastid. It localises to the chloroplast. Functionally, one of the primary rRNA binding proteins, it binds directly to 16S rRNA where it nucleates assembly of the body of the 30S subunit. With S5 and S12 plays an important role in translational accuracy. This is Small ribosomal subunit protein uS4c (rps4) from Welwitschia mirabilis (Tree tumbo).